Reading from the N-terminus, the 81-residue chain is Large ribosomal subunit protein bL31B (81 aa).

Belongs to the bacterial ribosomal protein bL31 family. Type B subfamily. In terms of assembly, part of the 50S ribosomal subunit.

The chain is Large ribosomal subunit protein bL31B from Bacillus anthracis (strain A0248).